Consider the following 88-residue polypeptide: YcgL domain-containing protein NTHI1684 (88 aa).

Residues 1 to 85 (MLCAIYKSKK…QDDGLFNSLS (85 aa)) form the YcgL domain.

This chain is YcgL domain-containing protein NTHI1684, found in Haemophilus influenzae (strain 86-028NP).